Consider the following 768-residue polypeptide: Envelope glycoprotein gp160 (768 aa).

The N-terminal stretch at 1–16 (MTKFLGIFIVLGIGIG) is a signal peptide. Over 17 to 701 (IGISTKQQWI…SWFDFSKWLN (685 aa)) the chain is Extracellular. Residue asparagine 37 is glycosylated (N-linked (GlcNAc...) asparagine; by host). The cysteines at positions 44 and 57 are disulfide-linked. 7 N-linked (GlcNAc...) asparagine; by host glycosylation sites follow: asparagine 70, asparagine 141, asparagine 151, asparagine 166, asparagine 181, asparagine 200, and asparagine 211. Disulfide bonds link cysteine 103/cysteine 219, cysteine 110/cysteine 210, cysteine 115/cysteine 167, cysteine 232/cysteine 262, and cysteine 242/cysteine 254. Residues 115 to 166 (CVELKGSATSTPATSTTAGTKLPCVRNKTDSNLQSCNDTIIEKEMNDEAASN) are V1. The interval 167 to 210 (CTFAMAGYIRDQKKNYSVVWNDAEIFCKRSTSHNGTKECYMIHC) is V2. N-linked (GlcNAc...) asparagine; by host glycans are attached at residues asparagine 256, asparagine 267, asparagine 277, asparagine 283, asparagine 295, asparagine 307, asparagine 317, asparagine 374, asparagine 415, asparagine 490, and asparagine 493. The tract at residues 312–344 (CKRPGNKTVLPVTIMAGLVFHSQKYNTRLRQAW) is V3. Cysteine 312 and cysteine 345 are disulfide-bonded. 2 disulfides stabilise this stretch: cysteine 397/cysteine 473 and cysteine 404/cysteine 446. A V4 region spans residues 404-446 (CKMDWFLNYLNNLTVDADHNHCKNNAGKGRSPGPCVQRTYVAC). Residues 489–496 (QNRTNVTL) are V5. The segment at 539–559 (VPFVLGFLGFLGAAGTAMGAA) is fusion peptide. The tract at residues 602–618 (LNARVTALEKYLADQAR) is immunosuppression. 2 N-linked (GlcNAc...) asparagine; by host glycosylation sites follow: asparagine 646 and asparagine 662. Residues 650–687 (LEWEKQIEGLEGNITKQLEQAREQEEKNLDAYQKLSDW) are a coiled coil. The MPER; binding to GalCer stretch occupies residues 683–704 (KLSDWSSFWSWFDFSKWLNILK). A helical membrane pass occupies residues 702 to 722 (ILKIGFLAVIGVIGLRLLYTL). Over 723–768 (YTCIARVRQGYSPLSPQIHIHPWKGQPDNAGEPEEGGRTGKSKSTH) the chain is Cytoplasmic. A YXXL motif; contains endocytosis signal motif is present at residues 733 to 736 (YSPL). Residues 744 to 768 (PWKGQPDNAGEPEEGGRTGKSKSTH) are disordered.

The mature envelope protein (Env) consists of a homotrimer of non-covalently associated gp120-gp41 heterodimers. The resulting complex protrudes from the virus surface as a spike. Interacts with host CD4 and CCR5. Gp120 also interacts with the C-type lectins CD209/DC-SIGN and CLEC4M/DC-SIGNR (collectively referred to as DC-SIGN(R)). As to quaternary structure, the mature envelope protein (Env) consists of a homotrimer of non-covalently associated gp120-gp41 heterodimers. The resulting complex protrudes from the virus surface as a spike. Post-translationally, specific enzymatic cleavages in vivo yield mature proteins. Envelope glycoproteins are synthesized as an inactive precursor that is heavily N-glycosylated and processed likely by host cell furin in the Golgi to yield the mature SU and TM proteins. The cleavage site between SU and TM requires the minimal sequence [KR]-X-[KR]-R.

It is found in the virion membrane. It localises to the host cell membrane. Its subcellular location is the host endosome membrane. In terms of biological role, the surface protein gp120 (SU) attaches the virus to the host lymphoid cell by binding to the primary receptor CD4. This interaction induces a structural rearrangement creating a high affinity binding site for a chemokine coreceptor like CCR5. This peculiar 2 stage receptor-interaction strategy allows gp120 to maintain the highly conserved coreceptor-binding site in a cryptic conformation, protected from neutralizing antibodies. These changes are transmitted to the transmembrane protein gp41 and are thought to activate its fusogenic potential by unmasking its fusion peptide. Its function is as follows. Surface protein gp120 (SU) may target the virus to gut-associated lymphoid tissue (GALT) by binding host ITGA4/ITGB7 (alpha-4/beta-7 integrins), a complex that mediates T-cell migration to the GALT. Interaction between gp120 and ITGA4/ITGB7 would allow the virus to enter GALT early in the infection, infecting and killing most of GALT's resting CD4+ T-cells. This T-cell depletion is believed to be the major insult to the host immune system leading to AIDS. The surface protein gp120 is a ligand for CD209/DC-SIGN and CLEC4M/DC-SIGNR, which are respectively found on dendritic cells (DCs), and on endothelial cells of liver sinusoids and lymph node sinuses. These interactions allow capture of viral particles at mucosal surfaces by these cells and subsequent transmission to permissive cells. DCs are professional antigen presenting cells, critical for host immunity by inducing specific immune responses against a broad variety of pathogens. They act as sentinels in various tissues where they take up antigen, process it, and present it to T-cells following migration to lymphoid organs. SIV subverts the migration properties of dendritic cells to gain access to CD4+ T-cells in lymph nodes. Virus transmission to permissive T-cells occurs either in trans (without DCs infection, through viral capture and transmission), or in cis (following DCs productive infection, through the usual CD4-gp120 interaction), thereby inducing a robust infection. In trans infection, bound virions remain infectious over days and it is proposed that they are not degraded, but protected in non-lysosomal acidic organelles within the DCs close to the cell membrane thus contributing to the viral infectious potential during DCs' migration from the periphery to the lymphoid tissues. On arrival at lymphoid tissues, intact virions recycle back to DCs' cell surface allowing virus transmission to CD4+ T-cells. Virion capture also seems to lead to MHC-II-restricted viral antigen presentation, and probably to the activation of SIV-specific CD4+ cells. Functionally, the transmembrane protein gp41 (TM) acts as a class I viral fusion protein. Under the current model, the protein has at least 3 conformational states: pre-fusion native state, pre-hairpin intermediate state, and post-fusion hairpin state. During fusion of viral and target intracellular membranes, the coiled coil regions (heptad repeats) assume a trimer-of-hairpins structure, positioning the fusion peptide in close proximity to the C-terminal region of the ectodomain. The formation of this structure appears to drive apposition and subsequent fusion of viral and target cell membranes. Complete fusion occurs in host cell endosomes. The virus undergoes clathrin-dependent internalization long before endosomal fusion, thus minimizing the surface exposure of conserved viral epitopes during fusion and reducing the efficacy of inhibitors targeting these epitopes. Membranes fusion leads to delivery of the nucleocapsid into the cytoplasm. In terms of biological role, the envelope glycoprotein gp160 precursor down-modulates cell surface CD4 antigen by interacting with it in the endoplasmic reticulum and blocking its transport to the cell surface. Its function is as follows. The gp120-gp41 heterodimer allows rapid transcytosis of the virus through CD4 negative cells such as simple epithelial monolayers of the intestinal, rectal and endocervical epithelial barriers. Both gp120 and gp41 specifically recognize glycosphingolipids galactosyl-ceramide (GalCer) or 3' sulfo-galactosyl-ceramide (GalS) present in the lipid rafts structures of epithelial cells. Binding to these alternative receptors allows the rapid transcytosis of the virus through the epithelial cells. This transcytotic vesicle-mediated transport of virions from the apical side to the basolateral side of the epithelial cells does not involve infection of the cells themselves. The protein is Envelope glycoprotein gp160 (env) of Simian immunodeficiency virus agm.vervet (isolate AGM155) (SIV-agm.ver).